The sequence spans 369 residues: Protein-glutamate methylesterase/protein-glutamine glutaminase 1 (369 aa).

Residues 11–128 enclose the Response regulatory domain; sequence RVLIVDDSAA…DLERQEASIR (118 aa). A 4-aspartylphosphate modification is found at Asp62. Residues 136 to 168 are disordered; that stretch reads ATETTRRRSQPEPRPLAPGPKLTADEILPARPP. The CheB-type methylesterase domain occupies 170–358; sequence PVPETMPVVC…LDRLAARIME (189 aa). Catalysis depends on residues Ser183, His209, and Asp305.

Belongs to the CheB family. Post-translationally, phosphorylated by CheA. Phosphorylation of the N-terminal regulatory domain activates the methylesterase activity.

It is found in the cytoplasm. It catalyses the reaction [protein]-L-glutamate 5-O-methyl ester + H2O = L-glutamyl-[protein] + methanol + H(+). The catalysed reaction is L-glutaminyl-[protein] + H2O = L-glutamyl-[protein] + NH4(+). Functionally, involved in chemotaxis. Part of a chemotaxis signal transduction system that modulates chemotaxis in response to various stimuli. Catalyzes the demethylation of specific methylglutamate residues introduced into the chemoreceptors (methyl-accepting chemotaxis proteins or MCP) by CheR. Also mediates the irreversible deamidation of specific glutamine residues to glutamic acid. In Cereibacter sphaeroides (strain ATCC 17023 / DSM 158 / JCM 6121 / CCUG 31486 / LMG 2827 / NBRC 12203 / NCIMB 8253 / ATH 2.4.1.) (Rhodobacter sphaeroides), this protein is Protein-glutamate methylesterase/protein-glutamine glutaminase 1.